A 59-amino-acid polypeptide reads, in one-letter code: Inner kinetochore subunit fta6 (59 aa).

In terms of assembly, component of the inner kinetochore constitutive centromere-associated network (CCAN) (also known as central kinetochore Sim4 complex in fission yeast), which is composed of at least cnl2, cnp3, cnp20, fta1, fta2, fta3, fta4, fta6, fta7, mal2, mhf1, mhf2, mis6, mis15, mis17, sim4 and wip1.

The protein localises to the nucleus. It is found in the chromosome. It localises to the centromere. The protein resides in the kinetochore. Its subcellular location is the cytoplasm. The protein localises to the cytoskeleton. It is found in the microtubule organizing center. It localises to the spindle pole body. Functionally, component of the kinetochore, a multiprotein complex that assembles on centromeric DNA and attaches chromosomes to spindle microtubules, mediating chromosome segregation and sister chromatid segregation during meiosis and mitosis. Component of the inner kinetochore constitutive centromere-associated network (CCAN), which serves as a structural platform for outer kinetochore assembly. The chain is Inner kinetochore subunit fta6 (fta6) from Schizosaccharomyces pombe (strain 972 / ATCC 24843) (Fission yeast).